Reading from the N-terminus, the 466-residue chain is Argininosuccinate lyase (466 aa).

This sequence belongs to the lyase 1 family. Argininosuccinate lyase subfamily.

Its subcellular location is the cytoplasm. The enzyme catalyses 2-(N(omega)-L-arginino)succinate = fumarate + L-arginine. Its pathway is amino-acid biosynthesis; L-arginine biosynthesis; L-arginine from L-ornithine and carbamoyl phosphate: step 3/3. This is Argininosuccinate lyase from Ehrlichia ruminantium (strain Gardel).